Consider the following 875-residue polypeptide: Probable ubiquitin carboxyl-terminal hydrolase 7 (875 aa).

The UBP-type zinc-finger motif lies at 54–167 (KECSHLKKGV…RDVQQFICSN (114 aa)). Positions 56, 58, 83, 86, 101, 104, 109, 116, 120, 127, 140, and 143 each coordinate Zn(2+). The 668-residue stretch at 208–875 (PGLKNLGATC…EAYMLFYERV (668 aa)) folds into the USP domain. Residue cysteine 217 is the Nucleophile of the active site. Phosphoserine occurs at positions 333 and 337. Positions 396–486 (YSKELSQSSD…ASPKKEVLKS (91 aa)) are disordered. Positions 401–438 (SQSSDSSQHQHDSFLPANSSPLAASSTKSLPSSELLDS) are enriched in low complexity. The span at 473–484 (NHEEASPKKEVL) shows a compositional bias: basic and acidic residues. Phosphoserine occurs at positions 486 and 493. Residues 575–586 (RSRFSRSPKKSS) are compositionally biased toward basic residues. Residues 575–628 (RSRFSRSPKKSSVKIVVDNANDDTDQAPTTNSSSLNENLLGGHASENDKSLKQS) form a disordered region. The span at 600–611 (QAPTTNSSSLNE) shows a compositional bias: polar residues. A Phosphoserine modification is found at serine 645. The active-site Proton acceptor is the histidine 812.

The protein belongs to the peptidase C19 family.

The catalysed reaction is Thiol-dependent hydrolysis of ester, thioester, amide, peptide and isopeptide bonds formed by the C-terminal Gly of ubiquitin (a 76-residue protein attached to proteins as an intracellular targeting signal).. The polypeptide is Probable ubiquitin carboxyl-terminal hydrolase 7 (ubp7) (Schizosaccharomyces pombe (strain 972 / ATCC 24843) (Fission yeast)).